Consider the following 103-residue polypeptide: MYAIIMTGGKQYKVQEGDVVFLEKLAAEEGSSVTFDKVLAVSKEGNLSFGAPVLESASVSGKVLNHGKGEKIIVFKYKAKKNIRKKKGHRQPYTKVQIEKINA.

The protein belongs to the bacterial ribosomal protein bL21 family. In terms of assembly, part of the 50S ribosomal subunit. Contacts protein L20.

Its function is as follows. This protein binds to 23S rRNA in the presence of protein L20. The sequence is that of Large ribosomal subunit protein bL21 from Ruminiclostridium cellulolyticum (strain ATCC 35319 / DSM 5812 / JCM 6584 / H10) (Clostridium cellulolyticum).